The primary structure comprises 188 residues: Putative manganese efflux pump MntP (188 aa).

A run of 6 helical transmembrane segments spans residues 3–23, 41–61, 62–82, 107–129, 143–163, and 168–188; these read LSAT…ASIG, LIFG…GMLA, SQFV…FLGG, LLVT…LAFL, ATFL…PLLG, and ILGG…HFAG.

Belongs to the MntP (TC 9.B.29) family.

It is found in the cell inner membrane. In terms of biological role, probably functions as a manganese efflux pump. The protein is Putative manganese efflux pump MntP of Klebsiella pneumoniae (strain 342).